A 201-amino-acid chain; its full sequence is UPF0301 protein RHA1_ro03630 (201 aa).

Belongs to the UPF0301 (AlgH) family.

The polypeptide is UPF0301 protein RHA1_ro03630 (Rhodococcus jostii (strain RHA1)).